We begin with the raw amino-acid sequence, 70 residues long: Large ribosomal subunit protein bL31 (70 aa).

Zn(2+) contacts are provided by C17, C19, C37, and C40.

This sequence belongs to the bacterial ribosomal protein bL31 family. Type A subfamily. Part of the 50S ribosomal subunit. It depends on Zn(2+) as a cofactor.

In terms of biological role, binds the 23S rRNA. This Clostridium kluyveri (strain NBRC 12016) protein is Large ribosomal subunit protein bL31.